A 286-amino-acid polypeptide reads, in one-letter code: Aldo-keto reductase MAV_4483 (286 aa).

The active-site Proton donor is Tyr-61. NADPH contacts are provided by Leu-201, Val-203, Val-239, Arg-241, Ser-242, Arg-247, and Asn-251.

This sequence belongs to the aldo/keto reductase family.

This Mycobacterium avium (strain 104) protein is Aldo-keto reductase MAV_4483.